Consider the following 432-residue polypeptide: Glutamate-1-semialdehyde 2,1-aminomutase (432 aa).

An N6-(pyridoxal phosphate)lysine modification is found at Lys-265.

Belongs to the class-III pyridoxal-phosphate-dependent aminotransferase family. HemL subfamily. As to quaternary structure, homodimer. The cofactor is pyridoxal 5'-phosphate.

Its subcellular location is the cytoplasm. It carries out the reaction (S)-4-amino-5-oxopentanoate = 5-aminolevulinate. The protein operates within porphyrin-containing compound metabolism; protoporphyrin-IX biosynthesis; 5-aminolevulinate from L-glutamyl-tRNA(Glu): step 2/2. The sequence is that of Glutamate-1-semialdehyde 2,1-aminomutase from Vibrio cholerae serotype O1 (strain ATCC 39541 / Classical Ogawa 395 / O395).